A 38-amino-acid polypeptide reads, in one-letter code: Spheniscin-1 (38 aa).

3 cysteine pairs are disulfide-bonded: Cys5/Cys33, Cys12/Cys27, and Cys17/Cys34.

In terms of assembly, monomer. In terms of tissue distribution, secreted into the stomach cavity.

It is found in the secreted. Functionally, has antifungal activity and antibacterial activity against Gram-positive and Gram-negative bacteria. Involved in the process of food preservation in the stomach during the incubation fast. May also be present during infection. This Aptenodytes patagonicus (King penguin) protein is Spheniscin-1.